The sequence spans 1392 residues: ATP-dependent helicase/nuclease subunit A (1392 aa).

Residues asparagine 3–arginine 489 enclose the UvrD-like helicase ATP-binding domain. Alanine 24–threonine 31 serves as a coordination point for ATP. 3 disordered regions span residues arginine 291–aspartate 319, arginine 556–alanine 594, and glycine 1051–lysine 1126. Basic and acidic residues-rich tracts occupy residues glutamate 305–aspartate 319 and alanine 569–glutamate 583. Residues arginine 556–glycine 886 form the UvrD-like helicase C-terminal domain. The segment covering serine 584 to alanine 594 has biased composition (acidic residues). Basic and acidic residues predominate over residues alanine 1088–leucine 1113.

This sequence belongs to the helicase family. AddA subfamily. Heterodimer of AddA and AddB/RexB. It depends on Mg(2+) as a cofactor.

The catalysed reaction is Couples ATP hydrolysis with the unwinding of duplex DNA by translocating in the 3'-5' direction.. The enzyme catalyses ATP + H2O = ADP + phosphate + H(+). In terms of biological role, the heterodimer acts as both an ATP-dependent DNA helicase and an ATP-dependent, dual-direction single-stranded exonuclease. Recognizes the chi site generating a DNA molecule suitable for the initiation of homologous recombination. The AddA nuclease domain is required for chi fragment generation; this subunit has the helicase and 3' -&gt; 5' nuclease activities. In Desulfitobacterium hafniense (strain Y51), this protein is ATP-dependent helicase/nuclease subunit A.